The following is a 248-amino-acid chain: 3-deoxy-manno-octulosonate cytidylyltransferase (248 aa).

The protein belongs to the KdsB family.

The protein localises to the cytoplasm. It catalyses the reaction 3-deoxy-alpha-D-manno-oct-2-ulosonate + CTP = CMP-3-deoxy-beta-D-manno-octulosonate + diphosphate. It participates in nucleotide-sugar biosynthesis; CMP-3-deoxy-D-manno-octulosonate biosynthesis; CMP-3-deoxy-D-manno-octulosonate from 3-deoxy-D-manno-octulosonate and CTP: step 1/1. The protein operates within bacterial outer membrane biogenesis; lipopolysaccharide biosynthesis. Activates KDO (a required 8-carbon sugar) for incorporation into bacterial lipopolysaccharide in Gram-negative bacteria. This Klebsiella pneumoniae subsp. pneumoniae (strain ATCC 700721 / MGH 78578) protein is 3-deoxy-manno-octulosonate cytidylyltransferase.